A 241-amino-acid polypeptide reads, in one-letter code: Ribosomal RNA small subunit methyltransferase G (241 aa).

Residues glycine 96, phenylalanine 101, 119–121 (EAS), 147–148 (VE), and arginine 166 contribute to the S-adenosyl-L-methionine site.

It belongs to the methyltransferase superfamily. RNA methyltransferase RsmG family.

It localises to the cytoplasm. The catalysed reaction is guanosine(527) in 16S rRNA + S-adenosyl-L-methionine = N(7)-methylguanosine(527) in 16S rRNA + S-adenosyl-L-homocysteine. Specifically methylates the N7 position of guanine in position 527 of 16S rRNA. The sequence is that of Ribosomal RNA small subunit methyltransferase G from Syntrophus aciditrophicus (strain SB).